A 327-amino-acid polypeptide reads, in one-letter code: Glutamyl endopeptidase (327 aa).

The first 29 residues, M1–A29, serve as a signal peptide directing secretion. A propeptide spanning residues L30–N68 is cleaved from the precursor. The disordered stretch occupies residues K33–L61. Over residues Q40–K54 the composition is skewed to low complexity. Active-site charge relay system residues include H119, D161, and S237. The interval F283 to A327 is disordered. A compositionally biased stretch (low complexity) spans D286–A327. Tandem repeats lie at residues P289–N291, P292–N294, P295–N297, P298–N300, P301–N303, P304–N306, P307–N309, P310–N312, and P313–N315. Positions P289–N315 are 9 X 3 AA repeats of P-[DN]-N.

Belongs to the peptidase S1B family. Proteolytically cleaved by aureolysin (aur). This cleavage leads to the activation of SspA.

The protein resides in the secreted. It catalyses the reaction Preferential cleavage: Glu-|-Xaa, Asp-|-Xaa.. Preferentially cleaves peptide bonds on the carboxyl-terminal side of aspartate and glutamate. Along with other extracellular proteases it is involved in colonization and infection of human tissues. Required for proteolytic maturation of thiol protease SspB and inactivation of SspC, an inhibitor of SspB. It is the most important protease for degradation of fibronectin-binding protein (FnBP) and surface protein A, which are involved in adherence to host cells. May also protect bacteria against host defense mechanism by cleaving the immunoglobulin classes IgG, IgA and IgM. May be involved in the stability of secreted lipases. The protein is Glutamyl endopeptidase (sspA) of Staphylococcus aureus (strain MW2).